Reading from the N-terminus, the 218-residue chain is Ribonuclease HII (218 aa).

The 190-residue stretch at 13–202 folds into the RNase H type-2 domain; it reads DLVAGVDEVG…VRAAHEARAT (190 aa). Residues Asp-19, Glu-20, and Asp-111 each contribute to the a divalent metal cation site.

It belongs to the RNase HII family. Mn(2+) serves as cofactor. Requires Mg(2+) as cofactor.

Its subcellular location is the cytoplasm. The catalysed reaction is Endonucleolytic cleavage to 5'-phosphomonoester.. Its function is as follows. Endonuclease that specifically degrades the RNA of RNA-DNA hybrids. This is Ribonuclease HII from Pseudomonas syringae pv. syringae (strain B728a).